The chain runs to 191 residues: Cell division protein SepF (191 aa).

The interval 1-77 (MEGQDDYQLL…MGSNVIGLPG (77 aa)) is disordered.

Belongs to the SepF family. As to quaternary structure, homodimer. Interacts with FtsZ.

The protein localises to the cytoplasm. Its function is as follows. Cell division protein that is part of the divisome complex and is recruited early to the Z-ring. Probably stimulates Z-ring formation, perhaps through the cross-linking of FtsZ protofilaments. Its function overlaps with FtsA. This chain is Cell division protein SepF, found in Synechococcus sp. (strain JA-2-3B'a(2-13)) (Cyanobacteria bacterium Yellowstone B-Prime).